The following is a 600-amino-acid chain: Elongation factor 4 (600 aa).

Residues Ser-4 to Tyr-186 form the tr-type G domain. GTP is bound by residues Asp-16 to Thr-21 and Asn-133 to Asp-136.

This sequence belongs to the TRAFAC class translation factor GTPase superfamily. Classic translation factor GTPase family. LepA subfamily.

It is found in the cell membrane. The enzyme catalyses GTP + H2O = GDP + phosphate + H(+). Its function is as follows. Required for accurate and efficient protein synthesis under certain stress conditions. May act as a fidelity factor of the translation reaction, by catalyzing a one-codon backward translocation of tRNAs on improperly translocated ribosomes. Back-translocation proceeds from a post-translocation (POST) complex to a pre-translocation (PRE) complex, thus giving elongation factor G a second chance to translocate the tRNAs correctly. Binds to ribosomes in a GTP-dependent manner. The chain is Elongation factor 4 from Mesoplasma florum (strain ATCC 33453 / NBRC 100688 / NCTC 11704 / L1) (Acholeplasma florum).